Consider the following 375-residue polypeptide: Alcohol dehydrogenase class-3 chain L (375 aa).

An N-acetylalanine modification is found at A1. Zn(2+) contacts are provided by C46, H68, C98, C101, C104, C112, and C175.

The protein belongs to the zinc-containing alcohol dehydrogenase family. Class-III subfamily. In terms of assembly, homodimer or heterodimer with H chain. Requires Zn(2+) as cofactor.

Its subcellular location is the cytoplasm. The enzyme catalyses a primary alcohol + NAD(+) = an aldehyde + NADH + H(+). It catalyses the reaction a secondary alcohol + NAD(+) = a ketone + NADH + H(+). The catalysed reaction is S-(hydroxymethyl)glutathione + NADP(+) = S-formylglutathione + NADPH + H(+). It carries out the reaction S-(hydroxymethyl)glutathione + NAD(+) = S-formylglutathione + NADH + H(+). Its function is as follows. Class-III ADH is remarkably ineffective in oxidizing ethanol, but it readily catalyzes the oxidation of long-chain primary alcohols and the oxidation of S-(hydroxymethyl) glutathione. This is Alcohol dehydrogenase class-3 chain L from Gadus morhua (Atlantic cod).